The sequence spans 470 residues: Cyclic AMP-responsive element-binding protein 3-like protein 3 (470 aa).

Residues 1–319 lie on the Cytoplasmic side of the membrane; that stretch reads MDGDISTGKM…TSKPAHAGTC (319 aa). The disordered stretch occupies residues 59–145; the sequence is SDSDEFLNSI…PEPPRTQVHE (87 aa). Residues 239–302 enclose the bZIP domain; the sequence is VLKKIRRKIR…LSLLEQLKHL (64 aa). Positions 241-270 are basic motif; it reads KKIRRKIRNKQSAQESRKKKKEYIDGLENR. Positions 281 to 302 are leucine-zipper; it reads LQRKVLHLEKQNLSLLEQLKHL. Residue K290 forms a Glycyl lysine isopeptide (Lys-Gly) (interchain with G-Cter in ubiquitin) linkage. The chain crosses the membrane as a helical; Signal-anchor for type II membrane protein span at residues 320–340; the sequence is IAVLLLSFVLIILPSISPFTA. Residues 341–470 lie on the Lumenal side of the membrane; the sequence is NKVDSPGDFI…RVVQDALGVL (130 aa). N-linked (GlcNAc...) asparagine glycosylation is found at N410 and N417.

Belongs to the bZIP family. ATF subfamily. In terms of assembly, binds DNA as a dimer. May form homodimers. Interacts with ATF6. Interacts with SYNV1/HRD1; this interaction leads to CREB3L3 ubiquitination and proteasomal degradation. Post-translationally, controlled by regulated intramembrane proteolysis (RIP). Following ER stress a fragment containing the cytoplasmic transcription factor domain is released by proteolysis. The cleavage seems to be performed sequentially by site-1 and site-2 proteases (PS1 and PS2). In terms of processing, N-glycosylation is required for optimal proteolytic activation. Ubiquitinated at Lys-290 by SYNV1/HRD1 via 'Lys-27'-linked ubiquitin.

The protein resides in the endoplasmic reticulum membrane. Its subcellular location is the nucleus. Transcription factor that may act during endoplasmic reticulum stress by activating unfolded protein response target genes. Activated in response to cAMP stimulation. Binds the cAMP response element (CRE). Activates transcription through box-B element and CRE. Seems to function synergistically with ATF6. In acute inflammatory response, may activate expression of acute phase response (APR) genes. May be involved in growth suppression. Regulates FGF21 transcription. Plays a crucial role in the regulation of triglyceride metabolism and is required for the maintenance of normal plasma triglyceride concentrations. The chain is Cyclic AMP-responsive element-binding protein 3-like protein 3 (Creb3l3) from Rattus norvegicus (Rat).